Here is a 172-residue protein sequence, read N- to C-terminus: 3-hydroxydecanoyl-[acyl-carrier-protein] dehydratase (172 aa).

Residue histidine 71 is part of the active site.

This sequence belongs to the thioester dehydratase family. FabA subfamily. As to quaternary structure, homodimer.

The protein localises to the cytoplasm. It catalyses the reaction a (3R)-hydroxyacyl-[ACP] = a (2E)-enoyl-[ACP] + H2O. It carries out the reaction (3R)-hydroxydecanoyl-[ACP] = (2E)-decenoyl-[ACP] + H2O. The catalysed reaction is (2E)-decenoyl-[ACP] = (3Z)-decenoyl-[ACP]. The protein operates within lipid metabolism; fatty acid biosynthesis. Necessary for the introduction of cis unsaturation into fatty acids. Catalyzes the dehydration of (3R)-3-hydroxydecanoyl-ACP to E-(2)-decenoyl-ACP and then its isomerization to Z-(3)-decenoyl-ACP. Can catalyze the dehydratase reaction for beta-hydroxyacyl-ACPs with saturated chain lengths up to 16:0, being most active on intermediate chain length. The sequence is that of 3-hydroxydecanoyl-[acyl-carrier-protein] dehydratase from Escherichia fergusonii (strain ATCC 35469 / DSM 13698 / CCUG 18766 / IAM 14443 / JCM 21226 / LMG 7866 / NBRC 102419 / NCTC 12128 / CDC 0568-73).